Here is a 239-residue protein sequence, read N- to C-terminus: Pyridoxine 5'-phosphate synthase (239 aa).

Asn7 serves as a coordination point for 3-amino-2-oxopropyl phosphate. Residue 9–10 (DH) coordinates 1-deoxy-D-xylulose 5-phosphate. Arg18 contributes to the 3-amino-2-oxopropyl phosphate binding site. The Proton acceptor role is filled by His43. 1-deoxy-D-xylulose 5-phosphate is bound by residues Arg45 and His50. Glu70 functions as the Proton acceptor in the catalytic mechanism. Thr100 contributes to the 1-deoxy-D-xylulose 5-phosphate binding site. Residue His191 is the Proton donor of the active site. Residues Gly192 and 213 to 214 (GH) contribute to the 3-amino-2-oxopropyl phosphate site.

Belongs to the PNP synthase family. In terms of assembly, homooctamer; tetramer of dimers.

Its subcellular location is the cytoplasm. It carries out the reaction 3-amino-2-oxopropyl phosphate + 1-deoxy-D-xylulose 5-phosphate = pyridoxine 5'-phosphate + phosphate + 2 H2O + H(+). It participates in cofactor biosynthesis; pyridoxine 5'-phosphate biosynthesis; pyridoxine 5'-phosphate from D-erythrose 4-phosphate: step 5/5. Its function is as follows. Catalyzes the complicated ring closure reaction between the two acyclic compounds 1-deoxy-D-xylulose-5-phosphate (DXP) and 3-amino-2-oxopropyl phosphate (1-amino-acetone-3-phosphate or AAP) to form pyridoxine 5'-phosphate (PNP) and inorganic phosphate. This is Pyridoxine 5'-phosphate synthase from Geobacter metallireducens (strain ATCC 53774 / DSM 7210 / GS-15).